Reading from the N-terminus, the 62-residue chain is Prokaryotic ubiquitin-like protein Pup (62 aa).

The tract at residues 1-29 is disordered; it reads MSQQSLNAPGPGAEDGNDPEAVTGGQTFA. An ARC ATPase binding region spans residues 21-56; sequence AVTGGQTFASAQAADDLLDEIDSVLESNAETFVRSF. Gln-62 is subject to Deamidated glutamine. Gln-62 is covalently cross-linked (Isoglutamyl lysine isopeptide (Gln-Lys) (interchain with K-? in acceptor proteins)).

The protein belongs to the prokaryotic ubiquitin-like protein family. In terms of assembly, strongly interacts with the proteasome-associated ATPase ARC through a hydrophobic interface; the interacting region of Pup lies in its C-terminal half. There is one Pup binding site per ARC hexamer ring. Is modified by deamidation of its C-terminal glutamine to glutamate by the deamidase Dop, a prerequisite to the subsequent pupylation process.

It functions in the pathway protein degradation; proteasomal Pup-dependent pathway. In terms of biological role, protein modifier that is covalently attached to lysine residues of substrate proteins, thereby targeting them for proteasomal degradation. The tagging system is termed pupylation. The protein is Prokaryotic ubiquitin-like protein Pup of Brachybacterium faecium (strain ATCC 43885 / DSM 4810 / JCM 11609 / LMG 19847 / NBRC 14762 / NCIMB 9860 / 6-10).